Here is a 160-residue protein sequence, read N- to C-terminus: Small ribosomal subunit protein uS9 (160 aa).

Belongs to the universal ribosomal protein uS9 family.

This Rhodopseudomonas palustris (strain ATCC BAA-98 / CGA009) protein is Small ribosomal subunit protein uS9.